A 252-amino-acid polypeptide reads, in one-letter code: Neurexophilin-3 (252 aa).

The first 22 residues, M1–G22, serve as a signal peptide directing secretion. The II stretch occupies residues Q23–V75. Positions P27–P59 are disordered. Residues R45 to P55 show a composition bias toward basic residues. 4 N-linked (GlcNAc...) asparagine glycosylation sites follow: N62, N127, N137, and N143. The segment at W76–F157 is III. The segment at H158–E166 is IV (linker domain). Positions A167–G252 are v (Cys-rich).

It belongs to the neurexophilin family. May be proteolytically processed at the boundary between the N-terminal non-conserved and the central conserved domain in neuron-like cells. Brain. Detected in several other tissues.

The protein localises to the secreted. Its function is as follows. May be signaling molecules that resemble neuropeptides. Ligand for alpha-neurexins. This is Neurexophilin-3 (Nxph3) from Rattus norvegicus (Rat).